The primary structure comprises 108 residues: MIPGEYQLQDGEIELCAGRERITVEVANTGDRPIQIGSHYHFAEANPALIFDRDKTRGYRLDVAAGTAIRFEPGQRREVTLIPFVGRRHVYGFRQAVMGALDEKGATS.

It belongs to the urease beta subunit family. Heterotrimer of UreA (gamma), UreB (beta) and UreC (alpha) subunits. Three heterotrimers associate to form the active enzyme.

Its subcellular location is the cytoplasm. The catalysed reaction is urea + 2 H2O + H(+) = hydrogencarbonate + 2 NH4(+). It participates in nitrogen metabolism; urea degradation; CO(2) and NH(3) from urea (urease route): step 1/1. This is Urease subunit beta from Chromohalobacter salexigens (strain ATCC BAA-138 / DSM 3043 / CIP 106854 / NCIMB 13768 / 1H11).